Here is a 115-residue protein sequence, read N- to C-terminus: Nitrogenase iron-iron protein delta chain (115 aa).

In terms of assembly, hexamer of two alpha, two beta, and two delta chains. It depends on iron-sulfur cluster as a cofactor.

The enzyme catalyses N2 + 8 reduced [2Fe-2S]-[ferredoxin] + 16 ATP + 16 H2O = H2 + 8 oxidized [2Fe-2S]-[ferredoxin] + 2 NH4(+) + 16 ADP + 16 phosphate + 6 H(+). Functionally, the key enzymatic reactions in nitrogen fixation are catalyzed by the nitrogenase complex, which has 2 components: the iron protein (component 2) and a component 1 which is either a molybdenum-iron protein, a vanadium-iron, or an iron-iron protein. This is Nitrogenase iron-iron protein delta chain (anfG) from Rhodobacter capsulatus (Rhodopseudomonas capsulata).